The following is a 713-amino-acid chain: Cyclomaltodextrin glucanotransferase (713 aa).

Residues 1–27 (MKRFMKLTAVWTLWLSLTLGLLSPVHA) form the signal peptide. Residues 28–165 (APDTSVSNKQ…NIKVIIDFAP (138 aa)) are A1. 4 residues coordinate Ca(2+): aspartate 54, asparagine 56, asparagine 59, and asparagine 60. Cysteine 70 and cysteine 77 form a disulfide bridge. 2 residues coordinate Ca(2+): glycine 78 and aspartate 80. 127–128 (YW) contacts substrate. Asparagine 166 lines the Ca(2+) pocket. A b region spans residues 166 to 229 (NHTSPASSDD…NLYDLADLNH (64 aa)). A substrate-binding site is contributed by histidine 167. Isoleucine 217 contributes to the Ca(2+) binding site. 220–223 (NLYD) is a binding site for substrate. Position 226 (aspartate 226) interacts with Ca(2+). Residues 230 to 433 (NNSSVDVYLK…LRKSNPAIAY (204 aa)) are A2. A substrate-binding site is contributed by arginine 254. The Nucleophile role is filled by aspartate 256. A substrate-binding site is contributed by 259–260 (KH). Residue histidine 260 coordinates Ca(2+). Residue glutamate 284 is the Proton donor of the active site. Substrate contacts are provided by histidine 354, aspartate 398, and arginine 402. The segment at 434–522 (GSTHERWINN…GTAVWQYTTD (89 aa)) is c. The d stretch occupies residues 523–609 (ATTPIIGNVG…SNIYDNFEVL (87 aa)). The region spanning 526–607 (PIIGNVGPMM…AASNIYDNFE (82 aa)) is the IPT/TIG domain. Positions 608–713 (VLTGDQVTVR…TATVNVNWQP (106 aa)) constitute a CBM20 domain. An e region spans residues 610-713 (TGDQVTVRFV…TATVNVNWQP (104 aa)).

The protein belongs to the glycosyl hydrolase 13 family. In terms of assembly, monomer. Ca(2+) serves as cofactor.

The protein resides in the secreted. The enzyme catalyses Cyclizes part of a (1-&gt;4)-alpha-D-glucan chain by formation of a (1-&gt;4)-alpha-D-glucosidic bond.. The chain is Cyclomaltodextrin glucanotransferase (cgt) from Bacillus sp. (strain 1011).